The chain runs to 251 residues: MKIFYKAINMTLSMFTVIPLPKYEWDDRAAKHIMKLYPFIGLIIGALWYLSFFVLSKLNVPIMLMAALILTVPYILTGFLHLDGFMDVSDALLSRRDKETKLRILKDSTVGAFSVISVVLLLLVEFAGMFTVLNKNLDMRILIFIPIASRVINGYFIVSQEMLGQSSLAKFFKEGTGKVDEIILLGIYVLVALITFFTLGINYLIAILAMGLISFILLLKVKKELGGINGDVAGYILVLMEFTGILLLGII.

The next 7 helical transmembrane spans lie at 36–56, 60–80, 110–130, 141–161, 181–201, 202–222, and 231–251; these read LYPF…FVLS, VPIM…TGFL, VGAF…AGMF, ILIF…VSQE, EIIL…TLGI, NYLI…LKVK, and DVAG…LGII.

This sequence belongs to the CobS family. Mg(2+) serves as cofactor.

Its subcellular location is the cell membrane. It carries out the reaction alpha-ribazole + adenosylcob(III)inamide-GDP = adenosylcob(III)alamin + GMP + H(+). The enzyme catalyses alpha-ribazole 5'-phosphate + adenosylcob(III)inamide-GDP = adenosylcob(III)alamin 5'-phosphate + GMP + H(+). Its pathway is cofactor biosynthesis; adenosylcobalamin biosynthesis; adenosylcobalamin from cob(II)yrinate a,c-diamide: step 7/7. Functionally, joins adenosylcobinamide-GDP and alpha-ribazole to generate adenosylcobalamin (Ado-cobalamin). Also synthesizes adenosylcobalamin 5'-phosphate from adenosylcobinamide-GDP and alpha-ribazole 5'-phosphate. In Clostridium perfringens (strain ATCC 13124 / DSM 756 / JCM 1290 / NCIMB 6125 / NCTC 8237 / Type A), this protein is Adenosylcobinamide-GDP ribazoletransferase.